Consider the following 261-residue polypeptide: Small ribosomal subunit protein eS1B (261 aa).

Over residues 1–18 (MTLGKNKRISKGGKRGKK) the composition is skewed to basic residues. The tract at residues 1-23 (MTLGKNKRISKGGKRGKKKAQET) is disordered.

Belongs to the eukaryotic ribosomal protein eS1 family. As to quaternary structure, component of the small ribosomal subunit. Mature ribosomes consist of a small (40S) and a large (60S) subunit. The 40S subunit contains about 33 different proteins and 1 molecule of RNA (18S). The 60S subunit contains about 49 different proteins and 3 molecules of RNA (25S, 5.8S and 5S).

The protein localises to the cytoplasm. This chain is Small ribosomal subunit protein eS1B, found in Trypanosoma cruzi (strain CL Brener).